A 387-amino-acid polypeptide reads, in one-letter code: Protoheme IX farnesyltransferase, mitochondrial (387 aa).

The next 8 helical transmembrane spans lie at 95 to 115 (LTVLVVLSTMSSYALAPYPGL), 117 to 137 (FNTLAWLTMGTALCSISANAF), 183 to 203 (FLVNPTVGWLGLGNIVLYMGI), 212 to 232 (IVNTWVGSLVGAIPPLMGWAA), 242 to 262 (PGGLITAAMLFAWQFPHFNAF), 284 to 306 (ALNARVSLRYALAFLPLSYAYIS), 311 to 330 (GPWYAVPATGTNMFLIARAW), and 345 to 365 (FFASLLHLPLLFTLTLACHMI).

It belongs to the UbiA prenyltransferase family.

It is found in the mitochondrion membrane. It catalyses the reaction heme b + (2E,6E)-farnesyl diphosphate + H2O = Fe(II)-heme o + diphosphate. Its function is as follows. Converts protoheme IX and farnesyl diphosphate to heme O. The sequence is that of Protoheme IX farnesyltransferase, mitochondrial (cox10) from Schizosaccharomyces pombe (strain 972 / ATCC 24843) (Fission yeast).